The sequence spans 437 residues: MPKYDNSNADQWGFETRSIHAGQSVDAQTSARNLPIYQSTAFVFDSAEHAKQRFALEDLGPVYSRLTNPTVEALENRIASLEGGVHAVAFSSGQAATTNAILNLAGAGDHIVTSPRLYGGTETLFLITLNRLGIDVSFVENPDDPESWQAAVQPNTKAFFGETFANPQADVLDIPAVAEVAHRNSVPLIIDNTIATAALVRPLELGADVVVASLTKFYTGNGSGLGGVLIDGGKFDWTVEKDGKPVFPYFVTPDAAYHGLKYADLGAPAFGLKVRVGLLRDTGSTLSAFNAWAAVQGIDTLSLRLERHNENAIKVAEFLNNHEKVEKVNFAGLKDSPWYATKEKLGLKYTGSVLTFEIKGGKDEAWAFIDALKLHSNLANIGDVRSLVVHPATTTHSQSDEAGLARAGVTQSTVRLSVGIETIDDIIADLEGGFAAI.

Residue Lys216 is modified to N6-(pyridoxal phosphate)lysine.

Belongs to the trans-sulfuration enzymes family. In terms of assembly, homohexamer. It depends on pyridoxal 5'-phosphate as a cofactor.

It catalyses the reaction O-acetyl-L-homoserine + hydrogen sulfide = L-homocysteine + acetate. It carries out the reaction O-acetyl-L-homoserine + methanethiol = L-methionine + acetate + H(+). It functions in the pathway amino-acid biosynthesis; L-methionine biosynthesis via de novo pathway; L-homocysteine from O-acetyl-L-homoserine: step 1/1. Inhibited by methionine and cystathionine. Catalyzes the conversion of O-acetyl-L-homoserine (OAH) into homocysteine in the methionine biosynthesis pathway. Can also use dimethyldisulfide and methanethiol as reduced sulfur sources, leading to the direct formation of methionine. Has weak cystathionine gamma-synthase activity. The protein is O-acetyl-L-homoserine sulfhydrylase of Corynebacterium glutamicum (strain ATCC 13032 / DSM 20300 / JCM 1318 / BCRC 11384 / CCUG 27702 / LMG 3730 / NBRC 12168 / NCIMB 10025 / NRRL B-2784 / 534).